The sequence spans 348 residues: Histidinol-phosphate aminotransferase (348 aa).

Positions 1-31 (MLPTRDCVRQTPAYTPGEQPQTAGFTKLNTN) are disordered. Over residues 18–31 (EQPQTAGFTKLNTN) the composition is skewed to polar residues. Residue Lys-207 is modified to N6-(pyridoxal phosphate)lysine.

This sequence belongs to the class-II pyridoxal-phosphate-dependent aminotransferase family. Histidinol-phosphate aminotransferase subfamily. As to quaternary structure, homodimer. Pyridoxal 5'-phosphate serves as cofactor.

The catalysed reaction is L-histidinol phosphate + 2-oxoglutarate = 3-(imidazol-4-yl)-2-oxopropyl phosphate + L-glutamate. It functions in the pathway amino-acid biosynthesis; L-histidine biosynthesis; L-histidine from 5-phospho-alpha-D-ribose 1-diphosphate: step 7/9. The sequence is that of Histidinol-phosphate aminotransferase from Microcystis aeruginosa (strain NIES-843 / IAM M-2473).